We begin with the raw amino-acid sequence, 430 residues long: Trigger factor (430 aa).

A PPIase FKBP-type domain is found at 157 to 242; sequence GDLVALETWS…AVEVSEPVLP (86 aa).

This sequence belongs to the FKBP-type PPIase family. Tig subfamily.

The protein resides in the cytoplasm. It carries out the reaction [protein]-peptidylproline (omega=180) = [protein]-peptidylproline (omega=0). Involved in protein export. Acts as a chaperone by maintaining the newly synthesized protein in an open conformation. Functions as a peptidyl-prolyl cis-trans isomerase. In Xanthomonas axonopodis pv. citri (strain 306), this protein is Trigger factor.